The following is a 1184-amino-acid chain: Calcium-activated potassium channel subunit alpha-1a (1184 aa).

Topologically, residues 1 to 39 are extracellular; sequence MSNNINFNKNPDSSVSISKMDVIIPFTPDVPCDNNGQRM. A helical transmembrane segment spans residues 40 to 60; it reads WWAFLASSMVTFFGGLFIILL. Residues 61 to 132 lie on the Cytoplasmic side of the membrane; that stretch reads WRTLKYLWTV…MISAQTLTGR (72 aa). S-palmitoyl cysteine attachment occurs at residues Cys71, Cys72, and Cys74. A helical transmembrane segment spans residues 133-153; that stretch reads VLVVLVFALSIGALGIYFIDS. Residues 154–168 are Extracellular-facing; sequence SDPIESCQNFYKDFT. A helical membrane pass occupies residues 169–189; it reads LQIDMAFNVFFLLYFGLRFIA. The Cytoplasmic portion of the chain corresponds to 190-193; the sequence is ANDK. A helical membrane pass occupies residues 194–214; the sequence is LWFWLEVNSVVDFFTVPPVFV. The Extracellular portion of the chain corresponds to 215-254; that stretch reads SVYLNRSWLGLRFLRALRLIQFSEILQFLNILKTSNSIKL. A helical membrane pass occupies residues 255–275; the sequence is VNLCSIFISTWLTAAGFIHLV. Topologically, residues 276-289 are cytoplasmic; that stretch reads ENSGDPWENFQNSQ. Residues 290 to 310 form a helical membrane-spanning segment; it reads PLSYWECVYLLMVTMSTVGYG. Over 311-321 the chain is Extracellular; that stretch reads DVYARTTLGRL. Residues 322-342 traverse the membrane as a helical segment; sequence FMVFFILGGLAMFASYVPEII. Over 343 to 1184 the chain is Cytoplasmic; it reads ELIGNRKKYG…PPIREVEDEC (842 aa). Residues 361–503 enclose the RCK N-terminal 1 domain; sequence RKHIVVCGHI…WNWKEGDDAI (143 aa). The Mg(2+) site is built by Glu393, Gln416, and Glu418. Asn468 contributes to the Ca(2+) binding site. The tract at residues 655 to 677 is disordered; sequence EHPSTLSPKKKQRNGGMRNSPNC. Phosphothreonine is present on Thr659. 3 positions are modified to phosphoserine: Ser661, Ser674, and Ser678. One can recognise an RCK N-terminal 2 domain in the interval 735–879; that stretch reads SGHVVVCIFG…MDRSSPDNSP (145 aa). Thr866 carries the phosphothreonine modification. Residues Ser874 and Ser878 each carry the phosphoserine modification. The Ca(2+) site is built by Gln908, Asp911, Asp914, and Asp916. Positions 908–916 match the Calcium bowl motif; the sequence is QFLDQDDDD. Positions 1082 to 1143 are disordered; sequence RASLSHSSHS…PEKRWFTDEA (62 aa). The segment covering 1084–1104 has biased composition (low complexity); it reads SLSHSSHSSHSSSKKSSSVHS. Basic and acidic residues predominate over residues 1116-1125; it reads KAREARDKQN.

It belongs to the potassium channel family. Calcium-activated (TC 1.A.1.3) subfamily. KCa1.1/KCNMA1 sub-subfamily. In terms of assembly, homotetramer; which constitutes the calcium-activated potassium channel. Post-translationally, phosphorylated. In terms of processing, palmitoylated.

The protein resides in the cell membrane. The enzyme catalyses K(+)(in) = K(+)(out). Its function is as follows. Potassium channel activated by both membrane depolarization or increase in cytosolic Ca(2+) that mediates export of K(+). It is also activated by the concentration of cytosolic Mg(2+). Its activation dampens the excitatory events that elevate the cytosolic Ca(2+) concentration and/or depolarize the cell membrane. It therefore contributes to repolarization of the membrane potential. Involved in determining peripheral auditory sensitivity. The polypeptide is Calcium-activated potassium channel subunit alpha-1a (Danio rerio (Zebrafish)).